A 181-amino-acid chain; its full sequence is uncharacterized protein (181 aa).

This is an uncharacterized protein from Escherichia coli (strain K12).